The following is a 987-amino-acid chain: VPS35 endosomal protein sorting factor-like (987 aa).

Over residues 1 to 23 the composition is skewed to low complexity; it reads MAERQSASSPTPSSPPQQQQQTP. The segment at 1–115 is disordered; that stretch reads MAERQSASSP…DPLNNPLEKK (115 aa). Residues 43–63 are compositionally biased toward basic and acidic residues; sequence NGREVERHPLNSITKTEDTGK. Positions 66–111 are enriched in low complexity; it reads QSSLSSNASSLQSAAAAASSSTATTDIDPLNNNNNNNTDIDPLNNP.

Belongs to the VPS35L family. As to quaternary structure, component of the heterotrimeric retriever complex.

Its subcellular location is the endosome. Functionally, acts as a component of the retriever complex. The retriever complex is a heterotrimeric complex related to retromer cargo-selective complex (CSC) and essential for retromer-independent retrieval and recycling of numerous cargos. The chain is VPS35 endosomal protein sorting factor-like from Dictyostelium discoideum (Social amoeba).